A 110-amino-acid chain; its full sequence is Inner kinetochore subunit mhf1 (110 aa).

The protein belongs to the TAF9 family. CENP-S/MHF1 subfamily. The MHF histone-fold complex is a heterotetramer of 2 mhf1-mhf2 heterodimers. Component of the inner kinetochore constitutive centromere-associated network (CCAN) (also known as central kinetochore Sim4 complex in fission yeast), which is composed of at least cnl2, cnp3, cnp20, fta1, fta2, fta3, fta4, fta6, fta7, mal2, mhf1, mhf2, mis6, mis15, mis17, sim4 and wip1.

Its subcellular location is the nucleus. Component of a FANCM-MHF complex that promotes gene conversion at blocked replication forks, probably by reversal of the stalled fork. FANCM-MHF promotes non-crossover recombination. The sequence is that of Inner kinetochore subunit mhf1 from Schizosaccharomyces pombe (strain 972 / ATCC 24843) (Fission yeast).